Consider the following 328-residue polypeptide: Surface antigen CRP170 (328 aa).

2 consecutive repeats follow at residues 38 to 102 (NAPC…CKKC) and 103 to 167 (NAPC…CKKC).

The protein is Surface antigen CRP170 of Giardia intestinalis (Giardia lamblia).